We begin with the raw amino-acid sequence, 162 residues long: uncharacterized protein (162 aa).

The signal sequence occupies residues 1–21 (MRLCGLLIFLSYIVYVDNAVT).

This is an uncharacterized protein from Caenorhabditis elegans.